A 128-amino-acid chain; its full sequence is Phosphoribosyl-AMP cyclohydrolase (128 aa).

D94 is a binding site for Mg(2+). C95 lines the Zn(2+) pocket. Mg(2+) is bound by residues D96 and D98. Zn(2+)-binding residues include C111 and C118.

This sequence belongs to the PRA-CH family. In terms of assembly, homodimer. Requires Mg(2+) as cofactor. The cofactor is Zn(2+).

The protein resides in the cytoplasm. The catalysed reaction is 1-(5-phospho-beta-D-ribosyl)-5'-AMP + H2O = 1-(5-phospho-beta-D-ribosyl)-5-[(5-phospho-beta-D-ribosylamino)methylideneamino]imidazole-4-carboxamide. It participates in amino-acid biosynthesis; L-histidine biosynthesis; L-histidine from 5-phospho-alpha-D-ribose 1-diphosphate: step 3/9. Functionally, catalyzes the hydrolysis of the adenine ring of phosphoribosyl-AMP. This is Phosphoribosyl-AMP cyclohydrolase from Streptomyces coelicolor (strain ATCC BAA-471 / A3(2) / M145).